The primary structure comprises 1516 residues: EF-hand calcium-binding domain-containing protein 6 (1516 aa).

A disordered region spans residues Met-1–Ala-23. Residues Lys-12–Thr-21 are compositionally biased toward polar residues. EF-hand domains are found at residues Ser-96–Pro-131, Arg-197–Arg-232, Lys-321–Arg-356, Ser-444–Lys-462, and Arg-528–Tyr-563. The Ca(2+) site is built by Asp-109, Asn-111, Asn-113, Met-115, Asp-120, Asp-210, Asn-212, Thr-214, and Glu-221. Positions Glu-618–Asn-638 are disordered. Residues Gln-628–Asn-638 show a composition bias toward polar residues. EF-hand domains follow at residues Lys-674–Pro-690, Glu-763–Asn-798, Leu-905–Pro-940, Ser-1086–Lys-1121, Ser-1193–Ile-1228, and Leu-1229–Pro-1264. Ca(2+) is bound by residues Asp-776, Asp-778, Asp-780, and Asp-787. Phosphothreonine is present on Thr-906. A disordered region spans residues Val-1263–Gly-1318. Ser-1265 is subject to Phosphoserine. The segment covering Gly-1274–Tyr-1297 has biased composition (polar residues). Residue Ser-1311 is modified to Phosphoserine. Phosphothreonine is present on residues Thr-1315 and Thr-1319. The interaction with PARK7 stretch occupies residues Gly-1318–Gln-1516. 4 consecutive EF-hand domains span residues Lys-1348–Asp-1373, Ile-1374–Ala-1409, Met-1454–Asn-1484, and Leu-1485–Gln-1516. The interval Asn-1422 to Gln-1516 is interaction with AR. Ca(2+) contacts are provided by Asp-1462, Asn-1464, Thr-1466, and Asp-1473.

Microtubule inner protein component of sperm flagellar doublet microtubules. Binds PARK7. Part of a ternary complex containing PARK7, EFCAB6/DJBP and AR.

The protein resides in the nucleus. Its subcellular location is the cytoplasm. It localises to the cytoskeleton. It is found in the flagellum axoneme. In terms of biological role, negatively regulates the androgen receptor by recruiting histone deacetylase complex, and protein DJ-1 antagonizes this inhibition by abrogation of this complex. Microtubule inner protein (MIP) part of the dynein-decorated doublet microtubules (DMTs) in cilia axoneme, which is required for motile cilia beating. The protein is EF-hand calcium-binding domain-containing protein 6 (Efcab6) of Mus musculus (Mouse).